Here is a 444-residue protein sequence, read N- to C-terminus: 3-phosphoshikimate 1-carboxyvinyltransferase (444 aa).

3-phosphoshikimate contacts are provided by lysine 32, serine 33, and arginine 37. Lysine 32 lines the phosphoenolpyruvate pocket. Phosphoenolpyruvate contacts are provided by glycine 105 and arginine 133. Positions 178, 180, 326, and 353 each coordinate 3-phosphoshikimate. Glutamine 180 lines the phosphoenolpyruvate pocket. The Proton acceptor role is filled by aspartate 326. Residues arginine 357 and arginine 398 each contribute to the phosphoenolpyruvate site.

It belongs to the EPSP synthase family. As to quaternary structure, monomer.

The protein localises to the cytoplasm. The enzyme catalyses 3-phosphoshikimate + phosphoenolpyruvate = 5-O-(1-carboxyvinyl)-3-phosphoshikimate + phosphate. The protein operates within metabolic intermediate biosynthesis; chorismate biosynthesis; chorismate from D-erythrose 4-phosphate and phosphoenolpyruvate: step 6/7. Catalyzes the transfer of the enolpyruvyl moiety of phosphoenolpyruvate (PEP) to the 5-hydroxyl of shikimate-3-phosphate (S3P) to produce enolpyruvyl shikimate-3-phosphate and inorganic phosphate. This Nitrosococcus oceani (strain ATCC 19707 / BCRC 17464 / JCM 30415 / NCIMB 11848 / C-107) protein is 3-phosphoshikimate 1-carboxyvinyltransferase.